A 520-amino-acid polypeptide reads, in one-letter code: Cell division control protein 3 (520 aa).

Over residues 1–24 (MSLKEEQVSIKQDPEQEERQHDQF) the composition is skewed to basic and acidic residues. Residues 1-83 (MSLKEEQVSI…SSQSEKGQVL (83 aa)) form a disordered region. S2 carries the N-acetylserine modification. S2 bears the Phosphoserine mark. Residue K4 forms a Glycyl lysine isopeptide (Lys-Gly) (interchain with G-Cter in SUMO) linkage. Phosphoserine is present on S9. Glycyl lysine isopeptide (Lys-Gly) (interchain with G-Cter in SUMO) cross-links involve residues K11 and K30. A Phosphothreonine modification is found at T47. The segment covering 51 to 64 (DSERFEAAESDVKV) has biased composition (basic and acidic residues). S60 carries the post-translational modification Phosphoserine. Residue K63 forms a Glycyl lysine isopeptide (Lys-Gly) (interchain with G-Cter in SUMO) linkage. A Phosphoserine modification is found at S77. Positions 116–411 (NGFSFNLLCV…ENYRSSKLAK (296 aa)) constitute a Septin-type G domain. Residues 126–133 (GPDGIGKT) form a G1 motif region. Residue 126–133 (GPDGIGKT) coordinates GTP. Residues 156-167 (ELANDQEEEEGQ) are compositionally biased toward acidic residues. Positions 156–181 (ELANDQEEEEGQGEGHENQSQEQRHK) are disordered. A compositionally biased stretch (basic and acidic residues) spans 168 to 179 (GEGHENQSQEQR). At S175 the chain carries Phosphoserine. The segment at 204–207 (DTEG) is G3 motif. Residues G207, 287–295 (KSDILTDEE), G344, and R360 each bind GTP. A G4 motif region spans residues 286–289 (AKSD). K287 participates in a covalent cross-link: Glycyl lysine isopeptide (Lys-Gly) (interchain with G-Cter in SUMO). A coiled-coil region spans residues 427-508 (ISKQQEEKTL…INSASPNVNH (82 aa)). T468 carries the phosphothreonine modification. A disordered region spans residues 496–520 (ELSINSASPNVNHSPVPTKKKGFLR). A compositionally biased stretch (polar residues) spans 497-510 (LSINSASPNVNHSP). A Phosphoserine modification is found at S509.

This sequence belongs to the TRAFAC class TrmE-Era-EngA-EngB-Septin-like GTPase superfamily. Septin GTPase family. In terms of assembly, component of the septin complex which consists of CDC3, CDC10, CDC11, CDC12 and probably SHS1 and rearranges to a cortical collar of highly ordered filaments at the mother-bud-neck. A complex formed by CDC3, CDC10, CDC11 and CDC12 is capable of forming long filaments in vitro and the components seem to be present in a 2:2:2:2 arrangement in vivo. The filaments are proposed to be formed by the end-to-end polymerization of CDC3-CDC12-CDC11 complexes with CDC10 serving as a bridge to bundle the polymers into paired filaments. Component of the GIN4 complex composed of at least BNI5, CDC3, CDC10, CDC11, CDC12, GIN4, NAP1 and SHS1. Self-associates. Interacts with SIZ1 and SYP1. In terms of processing, phosphorylated by CDC28. Phosphorylation at the end of G1 may facilitate initiation of a new cell cycle by promoting disassembly of the obsolete septin ring from the previous cell cycle. Sumoylated during mitosis on the mother cell side of the bud neck by UBC9/SIZ1. Sumoylation probably plays a central role in regulating septin ring disassembly during the cell cycle.

The protein resides in the membrane. It localises to the bud neck. Functionally, septins are GTPases involved in cytokinesis that assemble early in the cell cycle as a patch at the incipient bud site and form a ring approximate 15 minutes before bud emergence, which transforms into an hour-glass shaped collar of cortical filaments that spans both sides of the mother-bud neck. This collar persists until just before cytokinesis, when it splits into two rings that occupy opposite sides of the neck. The septins at the bud neck serve as a structural scaffold that recruits different components involved in diverse processes at specific stages during the cell cycle. Many proteins bind asymmetrically to the septin collar. The septin assembly is regulated by protein kinases GIN4 and/or CLA4. May act by recruiting MYO1 and HOF1, a protein involved in septation, to the site of cleavage. Septins are also involved in cell morphogenesis, bud site selection, chitin deposition, cell cycle regulation, cell compartmentalization and spore wall formation. The polypeptide is Cell division control protein 3 (CDC3) (Saccharomyces cerevisiae (strain ATCC 204508 / S288c) (Baker's yeast)).